Here is a 371-residue protein sequence, read N- to C-terminus: Cytochrome b (371 aa).

4 helical membrane-spanning segments follow: residues Phe-25–Val-45, Trp-69–Ile-90, Trp-105–Leu-125, and Phe-170–Ile-190. Positions 75 and 89 each coordinate heme b. Heme b is bound by residues His-174 and His-188. His-193 contacts a ubiquinone. 4 helical membrane passes run His-218 to Ser-238, Leu-280 to His-300, Leu-312 to Thr-332, and Phe-339 to Pro-358.

This sequence belongs to the cytochrome b family. The cytochrome bc1 complex contains 3 respiratory subunits (MT-CYB, CYC1 and UQCRFS1), 2 core proteins (UQCRC1 and UQCRC2) and probably 6 low-molecular weight proteins. Heme b serves as cofactor.

It localises to the mitochondrion inner membrane. Its function is as follows. Component of the ubiquinol-cytochrome c reductase complex (complex III or cytochrome b-c1 complex) that is part of the mitochondrial respiratory chain. The b-c1 complex mediates electron transfer from ubiquinol to cytochrome c. Contributes to the generation of a proton gradient across the mitochondrial membrane that is then used for ATP synthesis. In Antaresia childreni (Children's python), this protein is Cytochrome b (MT-CYB).